We begin with the raw amino-acid sequence, 413 residues long: MTWKPKMLILSHDLISPEKYIMGEDDIVELLGKSSQVVTSSQTQTPSCDPPLILRGSGSGDGEGNGPLPQPPPPLYHQQSLFIQEDEMASWLHQPNRQDYLYSQLLYSGVASTHPQSLASLEPPPPPRAQYILAADRPTGHILAERRAENFMNISRQRGNIFLGGVEAVPSNSTLLSSATESIPATHGTESRATVTGGVSRTFAVPGLGPRGKAVAIETAGTQSWGLCKAETEPVQRQPATETDITDERKRKTREETNVENQGTEEARDSTSSKRSRAAIMHKLSERRRRQKINEMMKALQELLPRCTKTDRSSMLDDVIEYVKSLQSQIQMFSMGHVMIPPMMYAGNIQQQYMPHMAMGMNRPPAFIPFPRQAHMAEGVGPVDLFRENEETEQETMSLLLREDKRTKQKMFS.

Residues Ser-40–Leu-75 form a disordered region. A Phosphothreonine modification is found at Thr-186. Ser-191 bears the Phosphoserine mark. 2 disordered regions span residues Thr-232–Ala-278 and Glu-391–Ser-413. Positions Thr-246–Thr-257 are enriched in basic and acidic residues. The 50-residue stretch at Arg-277–Leu-326 folds into the bHLH domain.

Homodimer. In terms of tissue distribution, expressed constitutively in leaves, stems, and flowers.

It localises to the nucleus. In Arabidopsis thaliana (Mouse-ear cress), this protein is Transcription factor bHLH23 (BHLH23).